A 661-amino-acid polypeptide reads, in one-letter code: Fusaric acid cluster transcription factor FUB12 (661 aa).

The zn(2)-C6 fungal-type DNA-binding region spans 17–48; the sequence is CVPCRTRKIKCNAAVVGLPCGSCVSRECPDDC. Disordered regions lie at residues 57–131 and 151–184; these read TVKV…RPPG and SAAQ…PQLD. Polar residues predominate over residues 73–98; that stretch reads PDTNGSVLSPRQQQLPTNVSRQTTDS. Residues 99–109 show a composition bias toward basic and acidic residues; it reads SHSDPVEESIH. Positions 110–119 are enriched in polar residues; that stretch reads ASHTGSSLRN. Basic and acidic residues predominate over residues 120–129; the sequence is DTPHSRDRRP.

Its subcellular location is the nucleus. In terms of biological role, efflux pump involved in export of biosynthesis of fusaric acid, a mycotoxin with low to moderate toxicity to animals and humans, but with high phytotoxic properties. Constitutes a self-protecting mechanism of the fungus against critical levels of FSA within the cell. In Fusarium oxysporum f. sp. lycopersici (strain 4287 / CBS 123668 / FGSC 9935 / NRRL 34936) (Fusarium vascular wilt of tomato), this protein is Fusaric acid cluster transcription factor FUB12.